Consider the following 122-residue polypeptide: Large ribosomal subunit protein uL14 (122 aa).

The protein belongs to the universal ribosomal protein uL14 family. Part of the 50S ribosomal subunit. Forms a cluster with proteins L3 and L19. In the 70S ribosome, L14 and L19 interact and together make contacts with the 16S rRNA in bridges B5 and B8.

Its function is as follows. Binds to 23S rRNA. Forms part of two intersubunit bridges in the 70S ribosome. The protein is Large ribosomal subunit protein uL14 of Cutibacterium acnes (strain DSM 16379 / KPA171202) (Propionibacterium acnes).